Consider the following 100-residue polypeptide: U12-ctenitoxin-Pn1a (100 aa).

The first 28 residues, 1–28, serve as a signal peptide directing secretion; that stretch reads MKYRIFKMKYTLLFLSVIALVHIFAVEA. A propeptide spanning residues 29 to 41 is cleaved from the precursor; sequence KDEPESDALVPQE. 5 cysteine pairs are disulfide-bonded: C44–C58, C51–C64, C57–C82, C66–C80, and C90–C97.

Belongs to the neurotoxin 09 (Tx3-6) family. Expressed by the venom gland.

The protein resides in the secreted. Functionally, probable neurotoxin. The protein is U12-ctenitoxin-Pn1a of Phoneutria nigriventer (Brazilian armed spider).